Consider the following 422-residue polypeptide: MSLEEKLNKYSNKLSMTNNLNKIDVYNKKINKYKERQIYSNLKKPQPIDESVISLYSLKNEYQKSPDKMTALGFGVTDVGKPVELLVFDRKKPTNNEVSIEIYYTGICHSDWHFIVGEWKADFPLIPGHELIGRVIDIGPNVDKYSIGDIVCVSPVIDSCGHCKMCTHHIEQHCMNGATEIYNQKTRLPGDIKPSGPITYGGYSNIVIIKQHFVYKFPKNLDIERCAPLMCAGATTYSPLRQAKVGPGMKVGIVGIGGLGHIAVKIAKAMGAHVVAITRTEWKFKDSVNNLGANESILSTNVWQMNQHKGSFDFILSTIPMAHDIVPYIELLKYKATICTVGELFPTVINGMDLAQHPCFLQSSLIAGSDEIKEMLAFCSEHNIMPDVQIIKADKINDTRQKLLESKAKYRYVIDIRASLNK.

Zn(2+) contacts are provided by cysteine 108, histidine 129, cysteine 160, cysteine 163, cysteine 166, cysteine 174, and cysteine 231.

It depends on Zn(2+) as a cofactor.

It is found in the host cytoplasm. It localises to the virion. The polypeptide is Probable zinc-type alcohol dehydrogenase-like protein L498 (Acanthamoeba polyphaga (Amoeba)).